Reading from the N-terminus, the 448-residue chain is Beta-glucosidase A (448 aa).

E166 functions as the Proton donor in the catalytic mechanism. The Nucleophile role is filled by E352.

This sequence belongs to the glycosyl hydrolase 1 family. Homooctamer.

It catalyses the reaction Hydrolysis of terminal, non-reducing beta-D-glucosyl residues with release of beta-D-glucose.. In terms of biological role, bglA is intracellular and cleaves cellobiose probably through inorganic phosphate mediated hydrolysis. The sequence is that of Beta-glucosidase A (bglA) from Paenibacillus polymyxa (Bacillus polymyxa).